Consider the following 508-residue polypeptide: Catalase (508 aa).

The first 21 residues, 1–21 (MHMSKSFLLISMGLASISVHA), serve as a signal peptide directing secretion. Residues His72 and Asn145 contribute to the active site. Tyr353 is a binding site for heme. Polar residues predominate over residues 373–392 (PKSPVANHNQDGPSNNSTGL). The disordered stretch occupies residues 373-396 (PKSPVANHNQDGPSNNSTGLGNVD).

Belongs to the catalase family. Heme is required as a cofactor.

Its subcellular location is the periplasm. The enzyme catalyses 2 H2O2 = O2 + 2 H2O. Decomposes hydrogen peroxide into water and oxygen; serves to protect cells from the toxic effects of hydrogen peroxide. The chain is Catalase from Vibrio vulnificus (strain YJ016).